Consider the following 357-residue polypeptide: Non-structural protein NS2 (357 aa).

2 disordered regions span residues 169-191 (PRLQ…DEAK) and 229-266 (DERD…HPKT). Residues 233–249 (EGDRDERGDEEQVKTLS) are compositionally biased toward basic and acidic residues. The span at 250–260 (DDDDQGEDASD) shows a compositional bias: acidic residues.

It belongs to the orbivirus non-structural protein NS2 family.

Functionally, single-stranded RNA-binding protein. This is Non-structural protein NS2 (Segment-8) from Antilocapra americana (Pronghorn).